The following is a 142-amino-acid chain: Large ribosomal subunit protein uL13 (142 aa).

Belongs to the universal ribosomal protein uL13 family. As to quaternary structure, part of the 50S ribosomal subunit.

Functionally, this protein is one of the early assembly proteins of the 50S ribosomal subunit, although it is not seen to bind rRNA by itself. It is important during the early stages of 50S assembly. The polypeptide is Large ribosomal subunit protein uL13 (Pasteurella multocida (strain Pm70)).